A 105-amino-acid polypeptide reads, in one-letter code: Thioredoxin (105 aa).

A Thioredoxin domain is found at 2 to 105 (VKIVGDLTEF…KLEEAIKKYM (104 aa)). Active-site nucleophile residues include cysteine 32 and cysteine 35. Cysteines 32 and 35 form a disulfide. Cysteine 69 and cysteine 73 each carry S-nitrosocysteine.

This sequence belongs to the thioredoxin family. In terms of processing, may be nitrosylated on several cysteine residues, depending on the oxidation state. Nitrosylated Cys-73 may serve as donor for nitrosylation of target proteins.

It is found in the nucleus. The protein localises to the cytoplasm. Its subcellular location is the secreted. Functionally, participates in various redox reactions through the reversible oxidation of its active center dithiol to a disulfide and catalyzes dithiol-disulfide exchange reactions. Plays a role in the reversible S-nitrosylation of cysteine residues in target proteins, and thereby contributes to the response to intracellular nitric oxide. Nitrosylates the active site Cys of CASP3 in response to nitric oxide (NO), and thereby inhibits caspase-3 activity. Induces the FOS/JUN AP-1 DNA binding activity in ionizing radiation (IR) cells through its oxidation/reduction status and stimulates AP-1 transcriptional activity. This chain is Thioredoxin (TXN), found in Ophiophagus hannah (King cobra).